A 123-amino-acid polypeptide reads, in one-letter code: Large ribosomal subunit protein uL14 (123 aa).

Belongs to the universal ribosomal protein uL14 family. Part of the 50S ribosomal subunit. Forms a cluster with proteins L3 and L19. In the 70S ribosome, L14 and L19 interact and together make contacts with the 16S rRNA in bridges B5 and B8.

In terms of biological role, binds to 23S rRNA. Forms part of two intersubunit bridges in the 70S ribosome. This chain is Large ribosomal subunit protein uL14, found in Actinobacillus succinogenes (strain ATCC 55618 / DSM 22257 / CCUG 43843 / 130Z).